A 107-amino-acid polypeptide reads, in one-letter code: MPYIYLIIAISTEVIGSAFLKSSEGFSKFIPSLGTIISFGICFYFLSKTMQHLPLNITYATWAGLGLVLTTVVSIIIFKEQINLITIVSIVLIIVGVVSLNIFGTSH.

The Cytoplasmic portion of the chain corresponds to 1 to 2 (MP). Residues 3 to 20 (YIYLIIAISTEVIGSAFL) form a helical membrane-spanning segment. Residues 21 to 29 (KSSEGFSKF) are Extracellular-facing. Residues 30–47 (IPSLGTIISFGICFYFLS) traverse the membrane as a helical segment. Residues 48–56 (KTMQHLPLN) lie on the Cytoplasmic side of the membrane. Residues 57–75 (ITYATWAGLGLVLTTVVSI) traverse the membrane as a helical segment. Over 76–85 (IIFKEQINLI) the chain is Extracellular. The chain crosses the membrane as a helical span at residues 86–103 (TIVSIVLIIVGVVSLNIF). The Cytoplasmic segment spans residues 104-107 (GTSH).

Belongs to the drug/metabolite transporter (DMT) superfamily. Small multidrug resistance (SMR) (TC 2.A.7.1) family.

The protein resides in the cell membrane. Its activity is regulated as follows. Ethidium export is inhibited by N-ethylmaleimide (NEM). In terms of biological role, multidrug exporter. Is implicated for the resistance to bacteriocidal quaternary ammonium compounds and ethidium bromide. This is Quaternary ammonium compound-resistance protein QacC from Staphylococcus aureus.